Reading from the N-terminus, the 6548-residue chain is Epiplakin (6548 aa).

Phosphothreonine is present on threonine 33. 9 Plectin repeats span residues 41-78 (AALP…TGLG), 79-116 (LTLL…LELK), 117-154 (EKLL…RTLG), 155-192 (WRLL…KETW), 285-322 (RRYL…KGIA), 323-360 (LQLL…PELH), 362-398 (QLLV…QPLA), 399-436 (LRLL…EETR), and 437-470 (QRLS…PETG). The interaction with KRT5 stretch occupies residues 49–1123 (SIAGVYVEAS…KASGLHLLPL (1075 aa)). Residues 545–565 (SVEELAAELKNIVEQAAATAK) are a coiled coil. 5 Plectin repeats span residues 611–648 (QRYL…PGTA), 649–686 (LILL…PDVY), 687–724 (AKLL…RDHG), 725–762 (IRLL…QILN), and 766–800 (LDPS…SETG). The stretch at 851–886 (TEDRRRQLLQRYRQRKITLEQVTQLLEKEMRRWTDI) forms a coiled coil. Plectin repeat units lie at residues 931 to 968 (HRYL…PSTA), 969 to 1006 (LALL…AEVY), 1007 to 1044 (GKLK…VEQA), 1224 to 1284 (QETL…TGLG), 1285 to 1322 (QQLL…MEQS), 1323 to 1360 (EHLR…QSEA), 1361 to 1398 (FPLL…EQTS), and 1402 to 1436 (TATG…ADTG). Threonine 1551 carries the phosphothreonine modification. Plectin repeat units lie at residues 1572-1609 (RRSL…PGTA), 1610-1647 (LVLL…KETY), 1648-1685 (MKLL…RDHG), 1686-1723 (IRLL…EEMN), and 1727-1761 (SDPS…PETG). An interaction with KRT5 region spans residues 1580–6545 (FIAGVLIQDT…PETGLLFLSL (4966 aa)). Residues 1819–1851 (RKLLREYRAQNIGLENLLEVITSTVEETEKQSQ) adopt a coiled-coil conformation. Plectin repeat units lie at residues 1898–1935 (RVYL…AGFA), 1936–1973 (AQML…EDLR), 1974–2011 (ERLV…REEA), 2012–2049 (LRLL…DDSL), 2225–2267 (KRYL…PGTA), 2268–2305 (LVLL…GEIQ), 2306–2343 (EKLL…RDHG), 2344–2381 (IRLL…EDMN), and 2385–2419 (ADPG…PETG). Phosphoserine occurs at positions 2430 and 2508. Positions 2578-2626 (AEETQESKPKPRDASLKQQDTGARGSGTSPDEGDAQDSSESARQQQEQT) are disordered. Basic and acidic residues predominate over residues 2582–2592 (QESKPKPRDAS). Composition is skewed to polar residues over residues 2593–2606 (LKQQ…SGTS) and 2615–2626 (SSESARQQQEQT). Plectin repeat units lie at residues 2740-2782 (KRYL…PGTA), 2783-2820 (LVLL…GEIQ), 2821-2858 (EKLL…RDHG), 2859-2896 (IRLL…EDMN), and 2900-2934 (ADPG…PETG). Positions 2748-2940 (CIAGVLVPVQ…PETGFYMLQL (193 aa)) are interaction with KRT14. The tract at residues 3093–3144 (AEETQESKPKPRDASLKQQDTGARGSGTSPDEGDAQDSSESARQQQEQTLRA) is disordered. Basic and acidic residues predominate over residues 3097 to 3107 (QESKPKPRDAS). Composition is skewed to polar residues over residues 3108–3121 (LKQQ…SGTS) and 3130–3144 (SSES…TLRA). Serine 3220 is subject to Phosphoserine. 5 Plectin repeats span residues 3255-3297 (KRYL…PGTA), 3298-3335 (LVLL…GEIQ), 3336-3373 (EKLL…RDHG), 3374-3411 (IRLL…EDMN), and 3415-3449 (ADPG…PETG). Residues serine 3460 and serine 3538 each carry the phosphoserine modification. Residues 3608 to 3659 (AEETQESKPKPRDASLKQQDTGARGSGTSPDEGDAQDSSESARQQQEQTLRA) form a disordered region. The span at 3612-3622 (QESKPKPRDAS) shows a compositional bias: basic and acidic residues. Polar residues-rich tracts occupy residues 3623–3636 (LKQQ…SGTS) and 3645–3659 (SSES…TLRA). At serine 3735 the chain carries Phosphoserine. Plectin repeat units lie at residues 3770-3812 (KRYL…PGTA), 3813-3850 (LVLL…GEIQ), 3851-3888 (EKLL…RDHG), 3889-3926 (IRLL…EDMN), and 3930-3964 (ADPG…PETG). Residues serine 3975 and serine 4053 each carry the phosphoserine modification. Positions 4123 to 4174 (AEETQESKPKPRDASLKQQDTGARGSGTSPDEGDAQDSSESARQQQEQTLRA) are disordered. Residues 4127-4137 (QESKPKPRDAS) are compositionally biased toward basic and acidic residues. Composition is skewed to polar residues over residues 4138-4151 (LKQQ…SGTS) and 4160-4174 (SSES…TLRA). Plectin repeat units lie at residues 4285-4327 (KRYL…PGTA), 4328-4365 (LVLL…GEIQ), 4366-4403 (EKLL…RDHG), 4404-4441 (IRLL…EDMN), and 4445-4479 (ADPG…PETG). Positions 4638 to 4689 (AEETQESKPKPRDASLKQQDTGARGSGTSPDEGDAQDSSESARQQQEQTLRA) are disordered. Positions 4642–4652 (QESKPKPRDAS) are enriched in basic and acidic residues. Polar residues-rich tracts occupy residues 4653 to 4666 (LKQQ…SGTS) and 4675 to 4689 (SSES…TLRA). Phosphoserine is present on serine 4765. Plectin repeat units follow at residues 4800–4842 (KRYL…PGTA), 4843–4880 (LVLL…GEIQ), 4881–4918 (EKLL…RDHG), 4919–4956 (IRLL…EDMN), and 4960–4994 (ADPG…PETG). 2 positions are modified to phosphoserine: serine 5005 and serine 5083. Residues 5153-5204 (AEETQESKPKPRDASLKQQDTGARGSGTSPDEGDAQDSSESARQQQEQTLRA) are disordered. The span at 5157–5167 (QESKPKPRDAS) shows a compositional bias: basic and acidic residues. Composition is skewed to polar residues over residues 5168–5181 (LKQQ…SGTS) and 5190–5204 (SSES…TLRA). Plectin repeat units lie at residues 5315–5357 (KRYL…PGTA), 5358–5395 (LVLL…GEIQ), 5396–5433 (EKLL…RDHG), 5434–5471 (IRLL…EDMN), and 5475–5509 (ADPG…PETG). Positions 5668–5719 (AEETQESKPKPRDASLKQQDTGARGSGTSPDEGDAQDSSESARQQQEQTLRA) are disordered. A compositionally biased stretch (basic and acidic residues) spans 5672 to 5682 (QESKPKPRDAS). Composition is skewed to polar residues over residues 5683–5696 (LKQQ…SGTS) and 5705–5719 (SSES…TLRA). Serine 5795 is subject to Phosphoserine. Plectin repeat units lie at residues 5830-5872 (KRYL…PGTA), 5873-5910 (LVLL…GEIQ), 5911-5948 (EKLL…RDHG), 5949-5986 (IRLL…EDMN), and 5990-6024 (ADPG…PETG). Phosphoserine is present on residues serine 6035 and serine 6113. The segment at 6183 to 6234 (AEETQESKPKPRDASLKQQDTGARGSGTSPDEGDAQDSSESARQQQEQTLRA) is disordered. Over residues 6187–6197 (QESKPKPRDAS) the composition is skewed to basic and acidic residues. Polar residues-rich tracts occupy residues 6198-6211 (LKQQ…SGTS) and 6220-6234 (SSES…TLRA). Serine 6310 carries the phosphoserine modification. Plectin repeat units lie at residues 6345-6387 (KRYL…PGTA), 6388-6425 (LVLL…GEIQ), 6426-6463 (EKLL…KNHG), 6464-6501 (IRLL…QEMN), and 6505-6539 (ADPG…PETG).

The protein belongs to the plakin or cytolinker family. As to quaternary structure, interacts with KRT5, KRT14 and KRT5/KRT14 heterotetramer; interacts preferentially with assembled filaments rather than keratin monomers. Interacts with KRT8 and KRT18 and KRT8/KRT18 heterotetramer; interacts preferentially with assembled filaments rather than keratin monomers. Interacts with KRT1, VIM and DES; interaction is stronger with KRT1 than with VIM or DES; interaction is dependent of higher-order structure of intermediate filament. In terms of tissue distribution, high levels in skin, small intestine and salivary gland. Lower levels in lung, uterus and liver. Not detected in brain, kidney, muscle, heart or spleen. In skin, expressed in all epidermal layers but not in the dermis. In intestine, expressed exclusively in the epithelial cell layer of the villi. In liver, expressed at hepatocyte margins. Around the region of the wound, expressed in the upper half of the epidermis. Weakly expressed on the basilar side of the suprabasal layer of the epidermis at the wound's edge. Expressed strongly in the upper layer of the epidermis, especially in larger keratinocytes. Expressed in undifferentiated primary keratinocytes. Strongly expressed in ductal cells, and also expressed in acinar cells. Expressed in hepatocytes and cholangiocytes.

It is found in the cytoplasm. The protein resides in the cytoskeleton. The protein localises to the apicolateral cell membrane. It localises to the basolateral cell membrane. Its subcellular location is the cell junction. It is found in the hemidesmosome. The protein resides in the tight junction. The protein localises to the cell projection. In terms of biological role, cytoskeletal linker protein that connects to intermediate filaments and controls their reorganization in response to stress. In response to mechanical stress like wound healing, is associated with the machinery for cellular motility by slowing down keratinocyte migration and proliferation and accelerating keratin bundling in proliferating keratinocytes thus contributing to tissue architecture. However in wound healing in corneal epithelium also positively regulates cell differentiation and proliferation and negatively regulates migration thereby controlling corneal epithelium morphogenesis and integrity. In response to cellular stress, plays a role in keratin filament reorganization, probably by protecting keratin filaments against disruption. During liver and pancreas injuries, plays a protective role by chaperoning disease-induced intermediate filament reorganization. The protein is Epiplakin of Mus musculus (Mouse).